The following is a 247-amino-acid chain: Probable transcriptional regulatory protein Dalk_2958 (247 aa).

The protein belongs to the TACO1 family.

Its subcellular location is the cytoplasm. In Desulfatibacillum aliphaticivorans, this protein is Probable transcriptional regulatory protein Dalk_2958.